Here is a 257-residue protein sequence, read N- to C-terminus: Putative cysteine-rich repeat secretory protein 28 (257 aa).

An N-terminal signal peptide occupies residues 1–26; it reads MFSTFGSVPILTVVAIQLFLIRNVLS. 2 Gnk2-homologous domains span residues 32–136 and 142–254; these read AYLH…TVDS and YEND…LYPF.

The protein belongs to the cysteine-rich repeat secretory protein family.

The protein localises to the secreted. The protein is Putative cysteine-rich repeat secretory protein 28 (CRRSP28) of Arabidopsis thaliana (Mouse-ear cress).